A 132-amino-acid chain; its full sequence is MKKVLALVVAAAMGLSSAAFAAETTTSSAAPATATATTTKAAPAKTVHHKKHKKAVEQKAQAAKKHHKKAVKKQEAAPATTTAPVEQKAQAAKKHHKAAAKPAVAQKAQAAKKHHKKAVKHEAAKPAAQPAA.

Residues 1 to 21 (MKKVLALVVAAAMGLSSAAFA) form the signal peptide. The segment covering 20 to 45 (FAAETTTSSAAPATATATTTKAAPAK) has biased composition (low complexity). The interval 20–132 (FAAETTTSSA…AAKPAAQPAA (113 aa)) is disordered. A propeptide spanning residues 22–90 (AETTTSSAAP…TTAPVEQKAQ (69 aa)) is cleaved from the precursor. Residues 62–71 (AAKKHHKKAV) show a composition bias toward basic residues. 2 stretches are compositionally biased toward low complexity: residues 76–90 (AAPATTTAPVEQKAQ) and 100–109 (AKPAVAQKAQ). The segment covering 110–119 (AAKKHHKKAV) has biased composition (basic residues).

The protein belongs to the Asr family. In terms of processing, proteolytic processing gives rise to the active protein.

The protein resides in the periplasm. Required for growth and/or survival at acidic conditions. In Enterobacter sp. (strain 638), this protein is Acid shock protein.